An 835-amino-acid chain; its full sequence is DNA primase (835 aa).

The CHC2-type zinc-finger motif lies at 778 to 817 (CLNFKHRLKTQSVRIFLSLHLTPDNCVTLTLMSQCFASKC).

Belongs to the herpesviridae DNA primase family. In terms of assembly, associates with the helicase and the primase-associated factor to form the helicase-primase factor.

The protein localises to the host nucleus. Functionally, essential component of the helicase/primase complex. Unwinds the DNA at the replication forks and generates single-stranded DNA for both leading and lagging strand synthesis. The primase initiates primer synthesis and thereby produces large amount of short RNA primers on the lagging strand that the polymerase elongates using dNTPs. The protein is DNA primase (56) of Saimiri sciureus (Common squirrel monkey).